We begin with the raw amino-acid sequence, 588 residues long: Aspartate--tRNA ligase (588 aa).

Position 177 (Glu-177) interacts with L-aspartate. The segment at 201–204 (QLFK) is aspartate. Residue Arg-223 coordinates L-aspartate. Residues 223–225 (RDE) and Gln-232 each bind ATP. An L-aspartate-binding site is contributed by His-451. ATP is bound at residue Glu-485. Residue Arg-492 coordinates L-aspartate. 537–540 (GLDR) provides a ligand contact to ATP.

It belongs to the class-II aminoacyl-tRNA synthetase family. Type 1 subfamily. Homodimer.

The protein localises to the cytoplasm. The enzyme catalyses tRNA(Asp) + L-aspartate + ATP = L-aspartyl-tRNA(Asp) + AMP + diphosphate. Catalyzes the attachment of L-aspartate to tRNA(Asp) in a two-step reaction: L-aspartate is first activated by ATP to form Asp-AMP and then transferred to the acceptor end of tRNA(Asp). This Staphylococcus haemolyticus (strain JCSC1435) protein is Aspartate--tRNA ligase.